We begin with the raw amino-acid sequence, 205 residues long: Glycerol-3-phosphate acyltransferase (205 aa).

At 1-3 (MSA) the chain is on the periplasmic side. Residues 4-24 (IAPGMILIAYLCGSISSAILV) form a helical membrane-spanning segment. The Cytoplasmic segment spans residues 25-52 (CRLCGLPDPRTSGSGNPGATNVLRIGGK). The chain crosses the membrane as a helical span at residues 53–73 (GAAVAVLIFDVLKGMLPVWGA). Topologically, residues 74-80 (YELGVSP) are periplasmic. A helical membrane pass occupies residues 81–101 (FWLGLIAIAACLGHIWPVFFG). Residues 102–111 (FKGGKGVATA) lie on the Cytoplasmic side of the membrane. A helical transmembrane segment spans residues 112–132 (FGAIAPIGWDLTGVMAGTWLL). Residues 133–137 (TVLLS) are Periplasmic-facing. The helical transmembrane segment at 138–158 (GYSSLGAIVSALIAPFYVWWF) threads the bilayer. At 159–205 (KPQFTFPVSMLSCLILLRHHDNIQRLWRRQETKIWTKFKRKREKDPE) the chain is on the cytoplasmic side.

The protein belongs to the PlsY family. As to quaternary structure, probably interacts with PlsX.

The protein resides in the cell inner membrane. The catalysed reaction is sn-glycerol 3-phosphate + an acyl-CoA = a 1-acyl-sn-glycero-3-phosphate + CoA. It carries out the reaction a fatty acyl-[ACP] + sn-glycerol 3-phosphate = a 1-acyl-sn-glycero-3-phosphate + holo-[ACP]. The protein operates within lipid metabolism; phospholipid metabolism. Functionally, catalyzes the transfer of an acyl group from acyl-ACP to glycerol-3-phosphate (G3P) to form lysophosphatidic acid (LPA). This enzyme can also utilize acyl-CoA as fatty acyl donor, but not acyl-PO(4). The polypeptide is Glycerol-3-phosphate acyltransferase (Escherichia coli O8 (strain IAI1)).